The chain runs to 126 residues: Profilin-3 (126 aa).

This sequence belongs to the profilin family. Occurs in many kinds of cells as a complex with monomeric actin in a 1:1 ratio. In terms of tissue distribution, in embryos, expression is specifically detected in body wall muscle cells. In adults, expression is localized to a striking dot-like fashion in body wall muscle.

It is found in the cytoplasm. The protein localises to the cytoskeleton. In terms of biological role, binds to actin and affects the structure of the cytoskeleton. At high concentrations, profilin prevents the polymerization of actin, whereas it enhances it at low concentrations. By binding to PIP2, it inhibits the formation of IP3 and DG. Also binds to poly(L-proline) and phosphatidylinositol 4,5-bisphosphate micelles. The polypeptide is Profilin-3 (pfn-3) (Caenorhabditis elegans).